The sequence spans 262 residues: Ribosome maturation factor RimP (262 aa).

Residues 197-262 (RELGVLPPPP…LGQTDPTEGD (66 aa)) form a disordered region. Positions 223 to 233 (KLPKAKLKAAK) are enriched in basic residues. Over residues 240-254 (TKEHRLAAAERKRLG) the composition is skewed to basic and acidic residues.

It belongs to the RimP family.

It is found in the cytoplasm. Required for maturation of 30S ribosomal subunits. The protein is Ribosome maturation factor RimP of Rhodopseudomonas palustris (strain BisB18).